The primary structure comprises 149 residues: Large ribosomal subunit protein bL9 (149 aa).

It belongs to the bacterial ribosomal protein bL9 family.

Binds to the 23S rRNA. In Xanthomonas oryzae pv. oryzae (strain MAFF 311018), this protein is Large ribosomal subunit protein bL9.